The following is a 95-amino-acid chain: Probable FAD-linked sulfhydryl oxidase OPG072 (95 aa).

The Intravirion segment spans residues methionine 1–arginine 8. The ERV/ALR sulfhydryl oxidase domain maps to methionine 1–leucine 95. Residues alanine 9–glycine 25 form a helical membrane-spanning segment. The Virion surface segment spans residues asparagine 26 to leucine 95. An intrachain disulfide couples cysteine 43 to cysteine 46.

This sequence belongs to the orthopoxvirus OPG072 family. In terms of assembly, interacts with OPG128; this interaction involves formation of a transient disulfide-bonded intermediate, allowing disulfide bond transfer. The cofactor is FAD.

The protein localises to the virion membrane. Its subcellular location is the host cytoplasm. It carries out the reaction 2 R'C(R)SH + O2 = R'C(R)S-S(R)CR' + H2O2. Its function is as follows. FAD-dependent sulfhydryl oxidase that catalyzes disulfide bond formation. The complete pathway for formation of disulfide bonds in intracellular virion membrane proteins sequentially involves thiol-disulfide transfer between OPG072, OPG128 and OPG088. The protein is Probable FAD-linked sulfhydryl oxidase OPG072 (OPG072) of Vaccinia virus (strain Copenhagen) (VACV).